The following is a 97-amino-acid chain: Integration host factor subunit beta (97 aa).

The protein belongs to the bacterial histone-like protein family. Heterodimer of an alpha and a beta chain.

This protein is one of the two subunits of integration host factor, a specific DNA-binding protein that functions in genetic recombination as well as in transcriptional and translational control. The chain is Integration host factor subunit beta from Buchnera aphidicola subsp. Cinara cedri (strain Cc).